Reading from the N-terminus, the 503-residue chain is Probable cytosol aminopeptidase (503 aa).

Residues lysine 268 and aspartate 273 each coordinate Mn(2+). The active site involves lysine 280. 3 residues coordinate Mn(2+): aspartate 291, aspartate 350, and glutamate 352. Arginine 354 is a catalytic residue.

It belongs to the peptidase M17 family. Mn(2+) is required as a cofactor.

The protein resides in the cytoplasm. It catalyses the reaction Release of an N-terminal amino acid, Xaa-|-Yaa-, in which Xaa is preferably Leu, but may be other amino acids including Pro although not Arg or Lys, and Yaa may be Pro. Amino acid amides and methyl esters are also readily hydrolyzed, but rates on arylamides are exceedingly low.. The catalysed reaction is Release of an N-terminal amino acid, preferentially leucine, but not glutamic or aspartic acids.. Its function is as follows. Presumably involved in the processing and regular turnover of intracellular proteins. Catalyzes the removal of unsubstituted N-terminal amino acids from various peptides. The chain is Probable cytosol aminopeptidase from Herminiimonas arsenicoxydans.